A 151-amino-acid chain; its full sequence is Single-stranded DNA-binding protein, mitochondrial (151 aa).

The N-terminal 16 residues, 1–16, are a transit peptide targeting the mitochondrion; that stretch reads MFRRPVLQVFRQFVRQ. Residues 30–141 form the SSB domain; that stretch reads LNRVQLLGRV…IIADNIIFLS (112 aa). Phosphoserine occurs at positions 67 and 79. Position 113 is an N6-acetyllysine (lysine 113). At lysine 122 the chain carries N6-succinyllysine.

Homotetramer. Interacts with MPG/AAG, through inhibition of its glycosylase activity it potentially prevents formation of DNA breaks in ssDNA, ensuring that base removal primarily occurs in dsDNA. Interacts with POLDIP2. Interacts with PRIMPOL.

It localises to the mitochondrion. The protein localises to the mitochondrion matrix. Its subcellular location is the mitochondrion nucleoid. In terms of biological role, binds preferentially and cooperatively to pyrimidine rich single-stranded DNA (ss-DNA). In vitro, required to maintain the copy number of mitochondrial DNA (mtDNA) and plays a crucial role during mtDNA replication by stimulating the activity of the replisome components POLG and TWNK at the replication fork. Promotes the activity of the gamma complex polymerase POLG, largely by organizing the template DNA and eliminating secondary structures to favor ss-DNA conformations that facilitate POLG activity. In addition it is able to promote the 5'-3' unwinding activity of the mtDNA helicase TWNK. May also function in mtDNA repair. This is Single-stranded DNA-binding protein, mitochondrial (Ssbp1) from Rattus norvegicus (Rat).